Consider the following 56-residue polypeptide: Large ribosomal subunit protein eL24 (56 aa).

Zn(2+) is bound by residues Cys-6, Cys-9, Cys-32, and Cys-36. The C4-type zinc-finger motif lies at 6–36; sequence CSFCNTRITPGTGKLYAKKDGTVYYFCSSKC.

Belongs to the eukaryotic ribosomal protein eL24 family. As to quaternary structure, part of the 50S ribosomal subunit. Forms a cluster with proteins L3 and L14. The cofactor is Zn(2+).

Binds to the 23S rRNA. This Methanothrix thermoacetophila (strain DSM 6194 / JCM 14653 / NBRC 101360 / PT) (Methanosaeta thermophila) protein is Large ribosomal subunit protein eL24.